A 132-amino-acid chain; its full sequence is UPF0102 protein Acid_2433 (132 aa).

Belongs to the UPF0102 family.

This Solibacter usitatus (strain Ellin6076) protein is UPF0102 protein Acid_2433.